The sequence spans 334 residues: MKKNQFLKESDVTAESVFFMKRRQVLKALGISAAALSLPHAAHADLLSWFKGNDRPPAPAGKPLEFSKPAAWQNDLPLTPADKVSGYNNFYEFGLDKADPAANAGSLKTDPWTLKISGEVAKPLTLDHDDLTRRFPLEERIYRMRCVEAWSMVVPWIGFPLHKLLALAEPTSNAKYVAFETIYAPEQMPGQQDRFIGGGLKYPYVEGLRLDEAMHPLTLMTVGVYGKALPPQNGAPVRLIVPWKYGFKGIKSIVSIKLTRECPPTTWNLAAPDEYGFYANVNPHVDHPRWSQATERFIGSGGILDVQRQPTLLFNGYADQVASLYRGLDLRENF.

Residues 1–44 (MKKNQFLKESDVTAESVFFMKRRQVLKALGISAAALSLPHAAHA) constitute a signal peptide (tat-type signal). Residues Asn-88, 91-92 (YE), Cys-146, Thr-181, Asn-233, Arg-238, and 249-251 (GIK) each bind Mo-molybdopterin.

Belongs to the MsrP family. As to quaternary structure, heterodimer of a catalytic subunit (MsrP) and a heme-binding subunit (MsrQ). Mo-molybdopterin serves as cofactor. Post-translationally, predicted to be exported by the Tat system. The position of the signal peptide cleavage has not been experimentally proven.

It is found in the periplasm. The catalysed reaction is L-methionyl-[protein] + a quinone + H2O = L-methionyl-(S)-S-oxide-[protein] + a quinol. It carries out the reaction L-methionyl-[protein] + a quinone + H2O = L-methionyl-(R)-S-oxide-[protein] + a quinol. Part of the MsrPQ system that repairs oxidized periplasmic proteins containing methionine sulfoxide residues (Met-O), using respiratory chain electrons. Thus protects these proteins from oxidative-stress damage caused by reactive species of oxygen and chlorine generated by the host defense mechanisms. MsrPQ is essential for the maintenance of envelope integrity under bleach stress, rescuing a wide series of structurally unrelated periplasmic proteins from methionine oxidation, including the primary periplasmic chaperone SurA and the lipoprotein Pal. The catalytic subunit MsrP is non-stereospecific, being able to reduce both (R-) and (S-) diastereoisomers of methionine sulfoxide. In Escherichia coli O17:K52:H18 (strain UMN026 / ExPEC), this protein is Protein-methionine-sulfoxide reductase catalytic subunit MsrP.